A 194-amino-acid polypeptide reads, in one-letter code: Lachesicidin (194 aa).

Positions 1–22 (MQGFFWKTWLVLAVCGTPASLA) are cleaved as a signal peptide. A propeptide spanning residues 23 to 160 (HRPLSYGEAL…DEEKDQPKRV (138 aa)) is cleaved from the precursor. 2 cysteine pairs are disulfide-bonded: cysteine 79/cysteine 90 and cysteine 101/cysteine 118. Residues 125–154 (EEEEEEEEEEQKAEAENDEEVEKEKEDEEK) show a composition bias toward acidic residues. Residues 125–157 (EEEEEEEEEEQKAEAENDEEVEKEKEDEEKDQP) form a disordered region.

Belongs to the cathelicidin family. In terms of tissue distribution, expressed by the venom gland.

The protein resides in the secreted. The protein localises to the target cell membrane. Its function is as follows. Potent antimicrobial peptide against Gram-negative and Gram-positive bacteria. Adopts an amphipathic alpha helical conformation, that may allow to partition into the target membrane. Low hemolytic activities have been observed on mammalian cells. The protein is Lachesicidin of Lachesis muta rhombeata (Bushmaster).